Reading from the N-terminus, the 280-residue chain is MYALLEAIEARARANRARVAMGIRDPNHKTLESAWKAQELGYAQVVLVGSKKEIDKIGTGLEVIDTEDPEKVLSDLLVSRKVDAVIRGTAKASGTLSSLKKALGMKRICRLALLLTADGTPFFLAPVGIDEGNTISDKLRMITLGAEHIRRLGVEPAVGVLSGGRMGDIGRDRRVDRTLADGEFITGRALELGINTKHYTILIEDAVKESNFIIAPDGISGNLIFRTVAFLGGGDGLGAPVLMDDYVFVDTSRVGGHFTKAIMLASALSHLNKERKKVIH.

It belongs to the MtxX family. In terms of assembly, may be part of a complex composed of 3 subunits; MtxA, MtxH and MtxX.

In Methanosarcina mazei (strain ATCC BAA-159 / DSM 3647 / Goe1 / Go1 / JCM 11833 / OCM 88) (Methanosarcina frisia), this protein is Putative methyltransferase mtx subunit X (mtxX).